We begin with the raw amino-acid sequence, 1036 residues long: MKKNIALMALTGVLTLASCGQNGNTPTADTTAPTVSLSVNNANLPSGVGSVVLSGTVNEASTVVVKNNAGTTVCTVEVAASGTFTCPATTIAGNTSTTSTSTSYTATATDAAKNVGTSSVVTVNVAGVSNPAPTTAVLTIDLAGVSSAPITIKDANGNVVQGYDNVTVNDNATITVARGVYTVTAGNVSGFNGPTTNFRVDLSGGNQTVTLNYTQAGTTTPTPVGSINILTPAVGTSVTGGSTVRVTFDKANEVQCMVGGAAAVTAQVDSTSGYCDVVVPNSTGNVVITVMGKGVNGQTVTATRNISVTQAAVSYGVVTPAGDQELTLTSEGIVRDADSGWRRLGQGVSTPSDPNLNLDIYIKGTVNFSVNAPAGQKVELFLARTTGSDVPTNDDIQAGDVLRSVASTSGTETFSLDSRRLAEFDGVRKWIVVRINGTQVTYQPVIADNKGPQQPDPELNGVQNAYSNILNNYNNSGLTYVRGPVNVFTSNPSLQDREFGQAPVGSSFVQRRPAGFESIRYYLVPESAFNNKALQESDEMLRAKAVKSVATVVSAPVLEPGTVKATSFSRVIGSGATSTVAPKALDNVTYRVYAISRDQVGNETASATYDLVRFDNVGPTITGSVIRDTSDLPFPSQEPERCLSDIATISLGGIADNVGGVGLNPGQGLTFTLGGRQIQAGQFDTNQLADPEYTIGFNSLTDALGNPVVTAPTNAKVYIDNTDPTVNFNRAVMQGTYASGGRVSVESDASDGGCGVYETRLFWDTANGVVDDATTTPAIGHPVQFARQRVTDGAKADSLNAGWNALQLPNGAGAVYLRSLVVDRAGNATISTTSIVVNAKITNQARPLLGGFDAFKRNASAQFVGDDNVIAGVNGTAATPNVTGNSALDNILSLDSVGTLTTNAYLPRGATETAITEKIRNVGAYGRFDATQWNLIRDYQLNTDPTLRSAYVNAGNLANQRGNNWRIRTPWVELGSSDTANTQQKFDFNSDLLNDFYYGRTFGNNHSVNLFSYDQFNGVVSDTAGAYSFYGETVRK.

The first 17 residues, 1-17, serve as a signal peptide directing secretion; it reads MKKNIALMALTGVLTLA. Disulfide bonds link C74-C86, C256-C275, and C642-C754.

Post-translationally, glycosylated; contains six glycans. In terms of processing, acylated in the N-terminal region. The N-terminus is blocked.

The protein localises to the secreted. It localises to the cell wall. The protein resides in the S-layer. Functionally, shape maintenance, possible protection from noxious enzymes or exogenous and unsettling DNA, and may mediate homotypic cell-cell contacts. The protein is Hexagonally packed intermediate-layer surface protein (hpi) of Deinococcus radiodurans.